We begin with the raw amino-acid sequence, 625 residues long: MTIRRLPPVLIDRIAAGEVVERPAAAVKELVENAIDAGATEIEVLVVGGGREMIRISDNGSGMSADELSLAVERHATSKLPTEDLLAISTLGFRGEALPSIGAVARLSIASRPKSAPHAFEIRVEGGVVTPPRPAALNGGTRVEVRDLFFATPARLKFLKSDRAEAAAAADVVRRLALARPDVAFTLMTDDRQPLTWVARSMDEAGRAARVADVLGAEAGRNLIPVVGERGGVRLVGLAGLPTYSKANSLSQFLFVNGRPVRDKLLMGALRAAYSDLLPSDRYPVLALFLSLDPREVDVNVHPAKTEVRFRDGGNVRALLVRTLTDALAARVPSTAGTIADRLVELARTPELEPARPAAAIPEFRPYRAEPMPAGGYDWRASPARPLNVAEPDGALEAEMESFAEAVQASFDVGMPAADARADAAVPETGDLDRPLGAARAQLHETYIVAQTREGMVLVDQHAAHERLVYEKLKAALERDGVARQGLLVPAVVDLDPAEADRLAERAGDLAALGLVIEPFGIGAVLVREVPALLAKADVTKLVRDVAEHSAEWDDALPLERRLLHVAATMACHGSVRAGRRLRVEEMNALLREMEETPNAGECNHGRPTFITLSLKDVEKLFARR.

It belongs to the DNA mismatch repair MutL/HexB family.

In terms of biological role, this protein is involved in the repair of mismatches in DNA. It is required for dam-dependent methyl-directed DNA mismatch repair. May act as a 'molecular matchmaker', a protein that promotes the formation of a stable complex between two or more DNA-binding proteins in an ATP-dependent manner without itself being part of a final effector complex. The sequence is that of DNA mismatch repair protein MutL from Azorhizobium caulinodans (strain ATCC 43989 / DSM 5975 / JCM 20966 / LMG 6465 / NBRC 14845 / NCIMB 13405 / ORS 571).